Consider the following 157-residue polypeptide: Peptide methionine sulfoxide reductase MsrA (157 aa).

C10 is an active-site residue.

This sequence belongs to the MsrA Met sulfoxide reductase family.

It catalyses the reaction L-methionyl-[protein] + [thioredoxin]-disulfide + H2O = L-methionyl-(S)-S-oxide-[protein] + [thioredoxin]-dithiol. It carries out the reaction [thioredoxin]-disulfide + L-methionine + H2O = L-methionine (S)-S-oxide + [thioredoxin]-dithiol. Functionally, has an important function as a repair enzyme for proteins that have been inactivated by oxidation. Catalyzes the reversible oxidation-reduction of methionine sulfoxide in proteins to methionine. The protein is Peptide methionine sulfoxide reductase MsrA of Clostridium botulinum (strain Kyoto / Type A2).